The primary structure comprises 775 residues: Tyrosine-protein phosphatase non-receptor type 12 (775 aa).

Met1 is subject to N-acetylmethionine. Ser19 carries the post-translational modification Phosphoserine. The 266-residue stretch at 28 to 293 (FARDFMRLRR…ELVHRAIAQL (266 aa)) folds into the Tyrosine-protein phosphatase domain. Substrate contacts are provided by residues Asp199, 231–237 (CSAGCGR), and Gln278. Cys231 functions as the Phosphocysteine intermediate in the catalytic mechanism. The segment at 322–341 (SSIDSEKQDSPPPKPPRTRS) is disordered. Phosphoserine is present on residues Ser331, Ser434, Ser448, and Ser467. Residues 344–437 (VEGDAKEEIL…KLERNLSFEI (94 aa)) form an interaction with TGFB1I1 region. A disordered region spans residues 462–775 (KIKSASSSVV…GPREPPSEWT (314 aa)). Thr519 carries the post-translational modification Phosphothreonine. 2 positions are modified to phosphoserine: Ser550 and Ser567. A compositionally biased stretch (polar residues) spans 558–573 (NHSQTLKTVSSTPNST). Thr569 bears the Phosphothreonine mark. Ser596 bears the Phosphoserine mark. Residue Thr598 is modified to Phosphothreonine. 4 positions are modified to phosphoserine: Ser603, Ser606, Ser608, and Ser613. The segment covering 622–640 (TSISTASATVSPASSAESA) has biased composition (low complexity). Position 673 is a phosphoserine (Ser673). Over residues 692–711 (VRPEWHELPNQEWSEQRESE) the composition is skewed to basic and acidic residues. A Phosphoserine modification is found at Ser748. The span at 766 to 775 (GPREPPSEWT) shows a compositional bias: basic and acidic residues.

Belongs to the protein-tyrosine phosphatase family. Non-receptor class 4 subfamily. In terms of assembly, interacts with PSTPIP1 and TGFB1I1. Interacts with PTK2B/PYK2. Interacts with LPXN. Interacts with SORBS2; this interaction greatly enhances WASF1 dephosphorylation and might mediate partial translocation to focal adhesion sites. Post-translationally, phosphorylated by STK24/MST3 and this results in inhibition of its activity.

It is found in the cytoplasm. Its subcellular location is the cell junction. The protein resides in the focal adhesion. It localises to the cell projection. The protein localises to the podosome. It catalyses the reaction O-phospho-L-tyrosyl-[protein] + H2O = L-tyrosyl-[protein] + phosphate. In terms of biological role, dephosphorylates a range of proteins, and thereby regulates cellular signaling cascades. Dephosphorylates cellular tyrosine kinases, such as ERBB2 and PTK2B/PYK2, and thereby regulates signaling via ERBB2 and PTK2B/PYK2. Selectively dephosphorylates ERBB2 phosphorylated at 'Tyr-1112', 'Tyr-1196', and/or 'Tyr-1248'. The protein is Tyrosine-protein phosphatase non-receptor type 12 (Ptpn12) of Mus musculus (Mouse).